The primary structure comprises 514 residues: MSVSKKPMVLVILDGYGYREEQQDNAILNAKTPVMDALWAKRPHTLIDASGLEVGLPDRQMGNSEVGHVNLGAGRIVYQDLTRLDVEIKERTFFANPVLTNAVDQAKNAGKAVHIMGLLSAGGVHSHEDHIMAMVELAAERGAEKIYLHAFLDGRDTPPRSAEASLKKFEDKFAALGKGRVASIVGRYYAMDRDNRWDRVEKAYDLMTLAQGEFQADTAVAGLQAAYARDENDEFVKATVIRAEGQADAAMEDGDTLIFMNFRADRAREITRAFVNADFDGFARKKVVNLNFVMLTEYAADIKTAVAYPPASLANTFGEWMAKNDKTQLRISETEKYAHVTFFFNGGVEEPFAGEERILINSPKVATYDLQPEMSSAELTEKLVAAIESGKYDTIICNYPNGDMVGHTGVMEAAIKAVEALDNCIEQVTKAVESVGGQLLITADHGNAEQMRDPATGQEHTAHTNLPVPLIYVGEKNVKAVEGGKLSDIAPTMLSLMGMEIPQEMTGKPLFIVE.

2 residues coordinate Mn(2+): Asp-14 and Ser-64. Residue Ser-64 is the Phosphoserine intermediate of the active site. Residues His-125, 155–156 (RD), Arg-187, Arg-193, 263–266 (RADR), and Lys-336 each bind substrate. The Mn(2+) site is built by Asp-403, His-407, Asp-444, His-445, and His-463.

This sequence belongs to the BPG-independent phosphoglycerate mutase family. In terms of assembly, monomer. Requires Mn(2+) as cofactor.

It carries out the reaction (2R)-2-phosphoglycerate = (2R)-3-phosphoglycerate. Its pathway is carbohydrate degradation; glycolysis; pyruvate from D-glyceraldehyde 3-phosphate: step 3/5. Its function is as follows. Catalyzes the interconversion of 2-phosphoglycerate and 3-phosphoglycerate. The sequence is that of 2,3-bisphosphoglycerate-independent phosphoglycerate mutase from Salmonella typhi.